The following is a 198-amino-acid chain: HTH-type transcriptional regulator BetI (198 aa).

Positions 8-68 (KIRRPQLVSA…ETMRDILRQL (61 aa)) constitute an HTH tetR-type domain. A DNA-binding region (H-T-H motif) is located at residues 31 to 50 (SVSLISQEAGVSSGIINHYF).

It participates in amine and polyamine biosynthesis; betaine biosynthesis via choline pathway [regulation]. Functionally, repressor involved in the biosynthesis of the osmoprotectant glycine betaine. It represses transcription of the choline transporter BetT and the genes of BetAB involved in the synthesis of glycine betaine. In Vibrio vulnificus (strain YJ016), this protein is HTH-type transcriptional regulator BetI.